Consider the following 227-residue polypeptide: ATP phosphoribosyltransferase (227 aa).

It belongs to the ATP phosphoribosyltransferase family. Short subfamily. As to quaternary structure, heteromultimer composed of HisG and HisZ subunits.

Its subcellular location is the cytoplasm. It catalyses the reaction 1-(5-phospho-beta-D-ribosyl)-ATP + diphosphate = 5-phospho-alpha-D-ribose 1-diphosphate + ATP. It participates in amino-acid biosynthesis; L-histidine biosynthesis; L-histidine from 5-phospho-alpha-D-ribose 1-diphosphate: step 1/9. Catalyzes the condensation of ATP and 5-phosphoribose 1-diphosphate to form N'-(5'-phosphoribosyl)-ATP (PR-ATP). Has a crucial role in the pathway because the rate of histidine biosynthesis seems to be controlled primarily by regulation of HisG enzymatic activity. The polypeptide is ATP phosphoribosyltransferase (Nitrosospira multiformis (strain ATCC 25196 / NCIMB 11849 / C 71)).